The primary structure comprises 307 residues: Ornithine carbamoyltransferase (307 aa).

Carbamoyl phosphate contacts are provided by residues 53–56 (STRT), Gln-80, Arg-104, and 131–134 (HPCQ). L-ornithine-binding positions include Asn-162, Asp-220, and 224 to 225 (SM). Residues 260 to 261 (CL) and Arg-288 contribute to the carbamoyl phosphate site.

The protein belongs to the aspartate/ornithine carbamoyltransferase superfamily. OTCase family.

It is found in the cytoplasm. The catalysed reaction is carbamoyl phosphate + L-ornithine = L-citrulline + phosphate + H(+). It participates in amino-acid biosynthesis; L-arginine biosynthesis; L-arginine from L-ornithine and carbamoyl phosphate: step 1/3. Its function is as follows. Reversibly catalyzes the transfer of the carbamoyl group from carbamoyl phosphate (CP) to the N(epsilon) atom of ornithine (ORN) to produce L-citrulline. The protein is Ornithine carbamoyltransferase of Nitrosomonas europaea (strain ATCC 19718 / CIP 103999 / KCTC 2705 / NBRC 14298).